Here is a 718-residue protein sequence, read N- to C-terminus: Scarecrow-like protein 9 (718 aa).

The interval 305–338 (VEKKKASDAQGGKRRARGRGRGRGRGGGGGQNGK) is disordered. Residues 316–328 (GKRRARGRGRGRG) show a composition bias toward basic residues. The region spanning 335-713 (QNGKKEVVDL…RTVMALSVWK (379 aa)) is the GRAS domain. The tract at residues 342–402 (VDLRSLLIHC…EARLAGTGSQ (61 aa)) is leucine repeat I (LRI). The tract at residues 421-484 (HQLFLACCPF…YGSPKVRITG (64 aa)) is VHIID. The short motif at 452–456 (VHVID) is the VHIID element. Positions 500-532 (ETGQRLAAYAKLFGVPFEYKAIAKKWDAIQLED) are leucine repeat II (LRII). Residues 541–635 (TVVNCLYRAE…MEVFGREALN (95 aa)) are PFYRE. Positions 638–713 (ACEGWERVER…RTVMALSVWK (76 aa)) are SAW.

This sequence belongs to the GRAS family. In terms of tissue distribution, expressed in cotyledons, leaves and flowers, and in the elongation zone in root.

It is found in the nucleus. Probable transcription factor involved in plant development. This is Scarecrow-like protein 9 (SCL9) from Arabidopsis thaliana (Mouse-ear cress).